We begin with the raw amino-acid sequence, 160 residues long: Transcription elongation factor GreA (160 aa).

A coiled-coil region spans residues 1-71; that stretch reads MAEKTYPMTK…GQISTLETQI (71 aa).

The protein belongs to the GreA/GreB family.

Necessary for efficient RNA polymerase transcription elongation past template-encoded arresting sites. The arresting sites in DNA have the property of trapping a certain fraction of elongating RNA polymerases that pass through, resulting in locked ternary complexes. Cleavage of the nascent transcript by cleavage factors such as GreA or GreB allows the resumption of elongation from the new 3'terminus. GreA releases sequences of 2 to 3 nucleotides. The polypeptide is Transcription elongation factor GreA (Streptococcus uberis (strain ATCC BAA-854 / 0140J)).